A 278-amino-acid chain; its full sequence is Shikimate dehydrogenase (NADP(+)) (278 aa).

Residues 19-21 (SRS) and Thr66 each bind shikimate. The active-site Proton acceptor is Lys70. 2 residues coordinate shikimate: Asn91 and Asp106. NADP(+) contacts are provided by residues 129–133 (GAGGA) and Phe221. Tyr223 provides a ligand contact to shikimate. NADP(+) is bound at residue Gly242.

It belongs to the shikimate dehydrogenase family. Homodimer.

It carries out the reaction shikimate + NADP(+) = 3-dehydroshikimate + NADPH + H(+). Its pathway is metabolic intermediate biosynthesis; chorismate biosynthesis; chorismate from D-erythrose 4-phosphate and phosphoenolpyruvate: step 4/7. Involved in the biosynthesis of the chorismate, which leads to the biosynthesis of aromatic amino acids. Catalyzes the reversible NADPH linked reduction of 3-dehydroshikimate (DHSA) to yield shikimate (SA). This Anaeromyxobacter sp. (strain K) protein is Shikimate dehydrogenase (NADP(+)).